A 522-amino-acid chain; its full sequence is Maturase K (522 aa).

Belongs to the intron maturase 2 family. MatK subfamily.

The protein resides in the plastid. Its subcellular location is the chloroplast. Functionally, usually encoded in the trnK tRNA gene intron. Probably assists in splicing its own and other chloroplast group II introns. This chain is Maturase K, found in Iris sanguinea (Japanese iris).